Reading from the N-terminus, the 410-residue chain is Schlafen-like protein 1 (410 aa).

2 disordered regions span residues 1–20 and 141–199; these read MSLR…VMSQ and LHHR…SGVR. Over residues 8 to 20 the composition is skewed to polar residues; it reads AQTQMWESPVMSQ. Over residues 154-173 the composition is skewed to pro residues; sequence SHSPGPSPGPSPGLRHPPLP. 264–271 is an ATP binding site; it reads GVEDSGLV. Residues 370 to 401 adopt a coiled-coil conformation; sequence QKWAMELGKLEEKVKVLTLEKEQLQQQLRQRQ.

The protein belongs to the Schlafen family. Subgroup I subfamily.

This chain is Schlafen-like protein 1 (Slfnl1), found in Mus musculus (Mouse).